We begin with the raw amino-acid sequence, 546 residues long: Pre-mRNA-splicing factor 38B (546 aa).

A compositionally biased stretch (polar residues) spans methionine 1 to proline 14. Positions methionine 1–serine 40 are disordered. Alanine 2 is modified (N-acetylalanine). Serine 5 bears the Phosphoserine mark. Low complexity predominate over residues glutamine 15–glutamine 28. Position 227 is an N6-acetyllysine (lysine 227). Residues isoleucine 229–valine 546 are disordered. Residues aspartate 243–valine 255 show a composition bias toward basic and acidic residues. Residues glutamate 256–glutamate 284 show a composition bias toward basic residues. Phosphoserine occurs at positions 288, 290, 318, and 320. Over residues phenylalanine 291–arginine 327 the composition is skewed to basic and acidic residues. Residues aspartate 292 to isoleucine 321 are a coiled coil. Basic residues predominate over residues arginine 328–aspartate 344. Residues arginine 345–lysine 421 show a composition bias toward basic and acidic residues. Residues glutamate 422–serine 450 are compositionally biased toward basic residues. Position 448 is a phosphoserine (serine 448). A compositionally biased stretch (basic and acidic residues) spans arginine 451–asparagine 468. 3 positions are modified to phosphoserine: serine 473, serine 475, and serine 481. Basic and acidic residues predominate over residues aspartate 480–glutamate 495. Residues lysine 496 to arginine 510 show a composition bias toward basic residues. Basic and acidic residues predominate over residues aspartate 511–valine 546. Phosphoserine occurs at positions 527, 529, and 534.

The protein belongs to the PRP38 family.

It is found in the nucleus. May be required for pre-mRNA splicing. The sequence is that of Pre-mRNA-splicing factor 38B (PRPF38B) from Homo sapiens (Human).